A 381-amino-acid polypeptide reads, in one-letter code: L-lactate dehydrogenase (381 aa).

In terms of domain architecture, FMN hydroxy acid dehydrogenase spans 1–380 (MIISASTDYR…TRDSLVRELG (380 aa)). Tyr24 serves as a coordination point for substrate. The FMN site is built by Ser106 and Gln127. Tyr129 is a substrate binding site. Thr155 is an FMN binding site. Arg164 is a binding site for substrate. Residue Lys251 coordinates FMN. His275 acts as the Proton acceptor in catalysis. Arg278 contacts substrate. 306 to 330 (DSGIRSGLDVVRMIALGADTVLIGR) is an FMN binding site.

This sequence belongs to the FMN-dependent alpha-hydroxy acid dehydrogenase family. As to quaternary structure, homotetramer. Requires FMN as cofactor.

The protein resides in the cell inner membrane. The enzyme catalyses (S)-lactate + A = pyruvate + AH2. In terms of biological role, catalyzes the conversion of L-lactate to pyruvate. Is coupled to the respiratory chain. This is L-lactate dehydrogenase from Pseudomonas putida (strain ATCC 700007 / DSM 6899 / JCM 31910 / BCRC 17059 / LMG 24140 / F1).